The following is a 43-amino-acid chain: Photosystem I reaction center subunit IX (43 aa).

A helical membrane pass occupies residues 7–27 (YLSVAPVLSALWFGALAGLLI).

The protein belongs to the PsaJ family.

Its subcellular location is the plastid. It localises to the chloroplast thylakoid membrane. Its function is as follows. May help in the organization of the PsaE and PsaF subunits. The polypeptide is Photosystem I reaction center subunit IX (Oenothera argillicola (Appalachian evening primrose)).